Reading from the N-terminus, the 192-residue chain is Peptidyl-tRNA hydrolase (192 aa).

Residue Tyr-18 participates in tRNA binding. His-23 (proton acceptor) is an active-site residue. 3 residues coordinate tRNA: Phe-69, Asn-71, and Asn-117.

It belongs to the PTH family. As to quaternary structure, monomer.

The protein localises to the cytoplasm. It catalyses the reaction an N-acyl-L-alpha-aminoacyl-tRNA + H2O = an N-acyl-L-amino acid + a tRNA + H(+). Functionally, hydrolyzes ribosome-free peptidyl-tRNAs (with 1 or more amino acids incorporated), which drop off the ribosome during protein synthesis, or as a result of ribosome stalling. Its function is as follows. Catalyzes the release of premature peptidyl moieties from peptidyl-tRNA molecules trapped in stalled 50S ribosomal subunits, and thus maintains levels of free tRNAs and 50S ribosomes. This Neisseria meningitidis serogroup B (strain ATCC BAA-335 / MC58) protein is Peptidyl-tRNA hydrolase.